A 214-amino-acid polypeptide reads, in one-letter code: Riboflavin kinase (214 aa).

Residues 1 to 26 (MRPDGPRDPVAGPDSGPEPPYPVRLS) are disordered. Residues Thr44 and Asn46 each contribute to the Mg(2+) site. Glu116 (nucleophile) is an active-site residue.

It belongs to the flavokinase family. The cofactor is Zn(2+). It depends on Mg(2+) as a cofactor.

The catalysed reaction is riboflavin + ATP = FMN + ADP + H(+). The protein operates within cofactor biosynthesis; FMN biosynthesis; FMN from riboflavin (ATP route): step 1/1. Its function is as follows. Catalyzes the phosphorylation of riboflavin (vitamin B2) to form flavin mononucleotide (FMN) coenzyme. In Aspergillus fumigatus (strain ATCC MYA-4609 / CBS 101355 / FGSC A1100 / Af293) (Neosartorya fumigata), this protein is Riboflavin kinase (fmn1).